Reading from the N-terminus, the 166-residue chain is tRNA-acetylating toxin (166 aa).

The disordered stretch occupies residues 1-22 (MSGYSAPRRISDADDVTSFSSG). The N-acetyltransferase domain occupies 1 to 162 (MSGYSAPRRI…LMLLMKDARA (162 aa)). Tyrosine 138 is a catalytic residue.

Belongs to the acetyltransferase family. GNAT subfamily. Homodimer, forms a complex with cognate antitoxin TacA.

It catalyses the reaction glycyl-tRNA(Gly) + acetyl-CoA = N-acetylglycyl-tRNA(Gly) + CoA + H(+). Toxic component of a type II toxin-antitoxin (TA) system. Overexpression of this gene alone in M.smegmatis inhibits growth, while overexpression of the tacA-tacT operon does not. Acetylates glycyl-tRNA(Gly) but not other tRNAs, blocks in vitro translation in the presence, but not absence, of acetyl-coenzyme A. Peptidyl-tRNA hydrolase (pth) counteracts the product of this enzyme in vitro. Neutralized by cognate antitoxin TacA. Does not seem to be active in laboratory growth conditions. Its function is as follows. TacA-TacT both represses and derepresses expression of its own operon. This chain is tRNA-acetylating toxin, found in Mycobacterium tuberculosis (strain ATCC 25618 / H37Rv).